The primary structure comprises 385 residues: Leucine aminopeptidase 1 (385 aa).

A signal peptide spans 1–19; sequence MKFPSFLSLGIAASTTALA. Positions 20–87 are excised as a propeptide; sequence ALPDQKPIGD…FPRAFAKTAV (68 aa). A glycan (N-linked (GlcNAc...) asparagine) is linked at asparagine 177. The Zn(2+) site is built by histidine 185 and aspartate 204. Asparagine 229 carries an N-linked (GlcNAc...) asparagine glycan. Residues glutamate 243 and aspartate 270 each contribute to the Zn(2+) site. A disulfide bridge links cysteine 319 with cysteine 323. Histidine 352 is a Zn(2+) binding site.

The protein belongs to the peptidase M28 family. M28E subfamily. As to quaternary structure, monomer. The cofactor is Zn(2+).

The protein resides in the secreted. Functionally, extracellular aminopeptidase that allows assimilation of proteinaceous substrates. The sequence is that of Leucine aminopeptidase 1 (LAP1) from Ajellomyces dermatitidis (strain ER-3 / ATCC MYA-2586) (Blastomyces dermatitidis).